The following is a 130-amino-acid chain: Small ribosomal subunit protein uS8A (130 aa).

It belongs to the universal ribosomal protein uS8 family. In terms of assembly, component of the small ribosomal subunit (SSU). Mature yeast ribosomes consist of a small (40S) and a large (60S) subunit. The 40S small subunit contains 1 molecule of ribosomal RNA (18S rRNA) and at least 33 different proteins. The large 60S subunit contains 3 rRNA molecules (25S, 5.8S and 5S rRNA) and at least 46 different proteins.

It localises to the cytoplasm. The protein localises to the nucleus. Its function is as follows. Component of the ribosome, a large ribonucleoprotein complex responsible for the synthesis of proteins in the cell. The small ribosomal subunit (SSU) binds messenger RNAs (mRNAs) and translates the encoded message by selecting cognate aminoacyl-transfer RNA (tRNA) molecules. The large subunit (LSU) contains the ribosomal catalytic site termed the peptidyl transferase center (PTC), which catalyzes the formation of peptide bonds, thereby polymerizing the amino acids delivered by tRNAs into a polypeptide chain. The nascent polypeptides leave the ribosome through a tunnel in the LSU and interact with protein factors that function in enzymatic processing, targeting, and the membrane insertion of nascent chains at the exit of the ribosomal tunnel. This Schizosaccharomyces pombe (strain 972 / ATCC 24843) (Fission yeast) protein is Small ribosomal subunit protein uS8A (rps2201).